Consider the following 450-residue polypeptide: Flavin-containing monooxygenase FMO GS-OX-like 5 (450 aa).

17 to 22 serves as a coordination point for FAD; it reads GAGPAG. Position 215–220 (215–220) interacts with NADP(+); it reads GNSSSA.

This sequence belongs to the FMO family. FAD is required as a cofactor.

Catalyzes the conversion of methylthioalkyl glucosinolates of any chain length into methylsulfinylalkyl glucosinolates. The polypeptide is Flavin-containing monooxygenase FMO GS-OX-like 5 (Arabidopsis thaliana (Mouse-ear cress)).